Consider the following 652-residue polypeptide: Nitrate reductase-like protein NarX (652 aa).

Positions 1–251 (MTVTPRTGSR…FGDQTDVPES (251 aa)) are nitrate reductase alpha subunit. Positions 53 to 117 (DKVVRSTHGV…AFSWYTYSPT (65 aa)) constitute a 4Fe-4S Mo/W bis-MGD-type domain. [4Fe-4S] cluster-binding residues include H60, C64, C68, and C103. D233 serves as a coordination point for Mo-bis(molybdopterin guanine dinucleotide). Residues 258 to 415 (VWQCASVLLT…TVAAVCRTGD (158 aa)) are nitrate reductase delta subunit. 5 consecutive transmembrane segments (helical) span residues 416–436 (MMGE…VAVG), 466–486 (PMFH…LVIP), 504–524 (AVVL…LLIY), 545–565 (LVLV…SGVV), and 595–615 (APLY…LWPF). A nitrate reductase gamma subunit region spans residues 416-652 (MMGELFWTVV…VLTRPRRRGW (237 aa)). The heme b site is built by H469 and H479. Heme b-binding residues include H602 and H620.

The protein in the N-terminal section; belongs to the nitrate reductase alpha subunit family. It in the central section; belongs to the NarJ/NarW family. This sequence in the C-terminal section; belongs to the nitrate reductase gamma subunit family. It depends on [4Fe-4S] cluster as a cofactor. Mo-bis(molybdopterin guanine dinucleotide) serves as cofactor. The cofactor is heme b.

Its subcellular location is the cell membrane. Its function is as follows. Does not seem to have nitrate reductase activity. This Mycobacterium tuberculosis (strain CDC 1551 / Oshkosh) protein is Nitrate reductase-like protein NarX (narX).